We begin with the raw amino-acid sequence, 469 residues long: MNPNQKIITIGSICMVVGIISLILQIGNIISIWISHSIQTGSQNHTGICNQSIITYKNSTWVNQTYVNISNTNVVAGKGTTPVILAGNSSLCPIRGWAIYSKDNGIRIGSKGDVFVIREPFISCSHLECRTFFLTQGALLNDKHSNGTVKDRSPYRALMSCPVGEAPSPYNSRFESVAWSACACHDGMGWLTIGISGPDDEAVAVLKYNGIITETIKSWRKKILRTQESECVCVNGSCFTIMTDGPSDGPASYKIFKIEKGKVTKSIELDAPNSHYEECSCYPDTGKVMCVCRDNWHGSNRPWVSFDQNLDYQIGYICSGVFGDNPRPKDGKGSCGPVYVDGANGVKGFSYRYGNGVWIGRIKSNSSRQGFEMIWDPNGWTETDSSFFVKQDVVAMTDWSGYSGSFVQHPELTGLDCMRPCFWVELIRGRPKEKTIWTSGSSISFCGVNSDTVDWSWPDGAELPFTIDK.

Over 1–6 the chain is Intravirion; it reads MNPNQK. A helical membrane pass occupies residues 7–27; the sequence is IITIGSICMVVGIISLILQIG. Residues 11–33 are involved in apical transport and lipid raft association; it reads GSICMVVGIISLILQIGNIISIW. Over 28-469 the chain is Virion surface; sequence NIISIWISHS…GAELPFTIDK (442 aa). The interval 36–90 is hypervariable stalk region; sequence HSIQTGSQNHTGICNQSIITYKNSTWVNQTYVNISNTNVVAGKGTTPVILAGNSS. N-linked (GlcNAc...) asparagine; by host glycans are attached at residues Asn-44, Asn-50, Asn-58, Asn-63, Asn-68, and Asn-88. Residues 91 to 469 are head of neuraminidase; it reads LCPIRGWAIY…GAELPFTIDK (379 aa). Disulfide bonds link Cys-92–Cys-417, Cys-124–Cys-129, Cys-184–Cys-231, Cys-233–Cys-238, Cys-279–Cys-292, Cys-281–Cys-290, Cys-318–Cys-335, and Cys-421–Cys-446. Substrate is bound at residue Arg-118. N-linked (GlcNAc...) asparagine; by host glycosylation occurs at Asn-146. Catalysis depends on Asp-151, which acts as the Proton donor/acceptor. A substrate-binding site is contributed by Arg-152. Asn-235 carries an N-linked (GlcNAc...) asparagine; by host glycan. 277 to 278 contributes to the substrate binding site; it reads EE. Arg-293 is a binding site for substrate. Asp-294, Gly-298, Asp-324, and Asn-344 together coordinate Ca(2+). Asn-365 carries an N-linked (GlcNAc...) asparagine; by host glycan. Substrate is bound at residue Arg-368. The active-site Nucleophile is the Tyr-402.

The protein belongs to the glycosyl hydrolase 34 family. Homotetramer. It depends on Ca(2+) as a cofactor. N-glycosylated.

The protein resides in the virion membrane. The protein localises to the host apical cell membrane. It catalyses the reaction Hydrolysis of alpha-(2-&gt;3)-, alpha-(2-&gt;6)-, alpha-(2-&gt;8)- glycosidic linkages of terminal sialic acid residues in oligosaccharides, glycoproteins, glycolipids, colominic acid and synthetic substrates.. Inhibited by the neuraminidase inhibitors zanamivir (Relenza) and oseltamivir (Tamiflu). These drugs interfere with the release of progeny virus from infected cells and are effective against all influenza strains. Resistance to neuraminidase inhibitors is quite rare. Functionally, catalyzes the removal of terminal sialic acid residues from viral and cellular glycoconjugates. Cleaves off the terminal sialic acids on the glycosylated HA during virus budding to facilitate virus release. Additionally helps virus spread through the circulation by further removing sialic acids from the cell surface. These cleavages prevent self-aggregation and ensure the efficient spread of the progeny virus from cell to cell. Otherwise, infection would be limited to one round of replication. Described as a receptor-destroying enzyme because it cleaves a terminal sialic acid from the cellular receptors. May facilitate viral invasion of the upper airways by cleaving the sialic acid moieties on the mucin of the airway epithelial cells. Likely to plays a role in the budding process through its association with lipid rafts during intracellular transport. May additionally display a raft-association independent effect on budding. Plays a role in the determination of host range restriction on replication and virulence. Sialidase activity in late endosome/lysosome traffic seems to enhance virus replication. The polypeptide is Neuraminidase (Influenza A virus (strain A/USA:Huston/AA/1945 H1N1)).